The chain runs to 398 residues: Probable purine permease 17 (398 aa).

The interval 1–26 (MEMSKASKQTTRHEESEHVQNPEPDQ) is disordered. Basic and acidic residues predominate over residues 11-20 (TRHEESEHVQ). S29 is modified (phosphoserine). 10 helical membrane-spanning segments follow: residues 43–63 (ISVSLCLFLVLLGDSLVMLLL), 88–108 (WTQALIQNAAFPILIPLFFIF), 127–147 (LFFLYLSLGVLVAAHSKLFAL), 155–175 (GIFSLISTTQLIFTAVLTAII), 183–203 (WIIISILLTIVIYVLGTPDFG), 219–239 (WLAFSATIAFSLSLCLIQLGF), 258–278 (VLEMQICVAFVASVVCLVGLF), 301–321 (VLSLVGLALSWQVWAVGMIGL), 332–352 (VVHMCASPFVALFVVLAFDFM), and 355–375 (VFSWPRIGALIGTVLALGSYF).

This sequence belongs to the purine permeases (TC 2.A.7.14) family.

It localises to the membrane. The sequence is that of Probable purine permease 17 (PUP17) from Arabidopsis thaliana (Mouse-ear cress).